The following is a 191-amino-acid chain: Fe/S biogenesis protein NfuA (191 aa).

Positions 149 and 152 each coordinate [4Fe-4S] cluster.

Belongs to the NfuA family. In terms of assembly, homodimer. The cofactor is [4Fe-4S] cluster.

Its function is as follows. Involved in iron-sulfur cluster biogenesis. Binds a 4Fe-4S cluster, can transfer this cluster to apoproteins, and thereby intervenes in the maturation of Fe/S proteins. Could also act as a scaffold/chaperone for damaged Fe/S proteins. This chain is Fe/S biogenesis protein NfuA, found in Citrobacter koseri (strain ATCC BAA-895 / CDC 4225-83 / SGSC4696).